The following is a 377-amino-acid chain: Nitric oxide reductase FlRd-NAD(+) reductase (377 aa).

This sequence belongs to the FAD-dependent oxidoreductase family. It depends on FAD as a cofactor.

The protein resides in the cytoplasm. It carries out the reaction 2 reduced [nitric oxide reductase rubredoxin domain] + NAD(+) + H(+) = 2 oxidized [nitric oxide reductase rubredoxin domain] + NADH. It participates in nitrogen metabolism; nitric oxide reduction. Its function is as follows. One of at least two accessory proteins for anaerobic nitric oxide (NO) reductase. Reduces the rubredoxin moiety of NO reductase. The protein is Nitric oxide reductase FlRd-NAD(+) reductase of Salmonella gallinarum (strain 287/91 / NCTC 13346).